A 151-amino-acid chain; its full sequence is Transcriptional repressor NrdR (151 aa).

Residues 3-34 (CPFCGYSESKVVDSRSTEDNMAIRRRRECLEC) fold into a zinc finger. The 91-residue stretch at 49–139 (ILVIKKDSSR…VYRQFKDINT (91 aa)) folds into the ATP-cone domain.

It belongs to the NrdR family. The cofactor is Zn(2+).

Its function is as follows. Negatively regulates transcription of bacterial ribonucleotide reductase nrd genes and operons by binding to NrdR-boxes. This is Transcriptional repressor NrdR from Clostridium acetobutylicum (strain ATCC 824 / DSM 792 / JCM 1419 / IAM 19013 / LMG 5710 / NBRC 13948 / NRRL B-527 / VKM B-1787 / 2291 / W).